Reading from the N-terminus, the 398-residue chain is Dihydrolipoyllysine-residue acetyltransferase component of acetoin cleaving system (398 aa).

Residues A2–G77 form the Lipoyl-binding domain. K43 carries the post-translational modification N6-lipoyllysine. Residues K118–L155 enclose the Peripheral subunit-binding (PSBD) domain. Catalysis depends on residues H371 and D375.

It belongs to the 2-oxoacid dehydrogenase family. It depends on (R)-lipoate as a cofactor.

It carries out the reaction N(6)-[(R)-dihydrolipoyl]-L-lysyl-[protein] + acetyl-CoA = N(6)-[(R)-S(8)-acetyldihydrolipoyl]-L-lysyl-[protein] + CoA. The protein operates within ketone degradation; acetoin degradation. The polypeptide is Dihydrolipoyllysine-residue acetyltransferase component of acetoin cleaving system (acoC) (Bacillus subtilis (strain 168)).